The sequence spans 483 residues: FAD-linked oxidoreductase pgmH (483 aa).

The region spanning 54-215 (SIRLATLVVY…TEFKYRVHKQ (162 aa)) is the FAD-binding PCMH-type domain.

It belongs to the oxygen-dependent FAD-linked oxidoreductase family. The cofactor is FAD.

Its pathway is pigment biosynthesis. The protein operates within secondary metabolite biosynthesis. FAD-linked oxidoreductase; part of the gene cluster that mediates the biosynthesis of pleosporalin A, ascomycone A, as well as a third cryptic naphthoquinone derived pigment, all responsible for the coloration of conidia. Essential for the production of pleosporalin A, but not the 2 other final products. The pathway begins with the biosynthesis of the cyclized heptaketide 3-acetonyl-1,6,8-trihydroxy-2-naphthaldehyde by the NR-PKS pgmA. The C-6 hydroxyl group is further methylated by the O-methyltransferase pgmB to yield fusarubinaldehyde which is in turn oxidized by the cytochrome P450 monooxygenase pgmC at C-9. The C-1 hydroxyl group is then methylated spontaneously. Although pgmE, pgmD and pgmH are essential for the production of pleosporalin A, it is not the case for the 2 other final products and it remains difficult to assign a specific function to each enzyme. PgmF and pgmG seem not to be involved in pigment biosynthesis although they were regulated by the cluster-specific transcription factor pgmR. This Aspergillus terreus (strain NIH 2624 / FGSC A1156) protein is FAD-linked oxidoreductase pgmH.